A 376-amino-acid polypeptide reads, in one-letter code: MASYPGHQHASAFDQAARSRGHSNRRTALRPRRQQEATEVRPEQKMPTLLRVYIDGPHGMGKTTTTQLLVALGSRDDIVYVPEPMTYWRVLGASETIANIYTTQHRLDQGEISAGDAAVVMTSAQITMGMPYAVTDAVLAPHIGGEAGSSHAPPPALTLIFDRHPIAALLCYPAARYLMGSMTPQAVLAFVALIPPTLPGTNIVLGALPEDRHIDRLAKRQRPGERLDLAMLAAIRRVYGLLANTVRYLQGGGSWREDWGQLSGTAVPPQGAEPQSNAGPRPHIGDTLFTLFRAPELLAPNGDLYNVFAWALDVLAKRLRPMHVFILDYDQSPAGCRDALLQLTSGMIQTHVTTPGSIPTICDLARTFAREMGEAN.

The tract at residues 1–44 (MASYPGHQHASAFDQAARSRGHSNRRTALRPRRQQEATEVRPEQ) is disordered. The span at 19–32 (SRGHSNRRTALRPR) shows a compositional bias: basic residues. The segment covering 33 to 44 (RQQEATEVRPEQ) has biased composition (basic and acidic residues). 56-63 (GPHGMGKT) is an ATP binding site. Catalysis depends on Glu-83, which acts as the Proton acceptor. Substrate-binding residues include Tyr-101 and Gln-125. Arg-216 serves as a coordination point for ATP. Arg-222 lines the substrate pocket. Residues 260 to 280 (GQLSGTAVPPQGAEPQSNAGP) are disordered.

The protein belongs to the herpesviridae thymidine kinase family. As to quaternary structure, homodimer.

The enzyme catalyses thymidine + ATP = dTMP + ADP + H(+). Catalyzes the transfer of the gamma-phospho group of ATP to thymidine to generate dTMP in the salvage pathway of pyrimidine synthesis. The dTMP serves as a substrate for DNA polymerase during viral DNA replication. Allows the virus to be reactivated and to grow in non-proliferative cells lacking a high concentration of phosphorylated nucleic acid precursors. In Human herpesvirus 1 (strain SC16) (HHV-1), this protein is Thymidine kinase.